Here is a 752-residue protein sequence, read N- to C-terminus: Reticulon-1-B (752 aa).

Disordered regions lie at residues 1–57 (MAAN…TSTD), 264–319 (EYPG…SEKQ), 334–424 (KAKE…SPSI), and 444–465 (ESCD…SPMM). The segment covering 264-273 (EYPGNQQGKS) has biased composition (polar residues). Residues 334 to 361 (KAKEGTKRFSSETNDEKQSRSFHAEKQD) are compositionally biased toward basic and acidic residues. Positions 363-383 (TVMSTEATSASHYTKASSAES) are enriched in polar residues. Residues 566-752 (AIDLLYWRDV…AKIPGTKQKE (187 aa)) form the Reticulon domain. Transmembrane regions (helical) follow at residues 580-600 (IVFG…VVSV) and 684-704 (VLMW…LLIM).

In terms of tissue distribution, isoform A and isoform C are both expressed in the animal hemisphere (presumptive neural ectoderm) of blastula and gastrula stage embryos, and along the anterior neural border, in the panplacodal primordium, and in the dorsolateral side of archenteron roof of late neurula embryos. At the tailbud stage, expression of the isoforms begin to differ. Isoform A localizes to the cranial placodes including the trigeminal placode, lateral line placode, olfactory placode and otic vesicle. Isoform C localizes to the central nervous system, including the spinal cord, prosencephalon, mesencephalon and rhombencephalon, as well as the lateral line placode, otic vesicle and pronephros.

Its subcellular location is the endoplasmic reticulum membrane. It is found in the nucleus. Inhibits amyloid precursor protein processing, probably by blocking BACE1 activity. The polypeptide is Reticulon-1-B (rtn1-b) (Xenopus laevis (African clawed frog)).